A 99-amino-acid chain; its full sequence is UPF0473 protein SMU_2077c (99 aa).

This sequence belongs to the UPF0473 family.

This chain is UPF0473 protein SMU_2077c, found in Streptococcus mutans serotype c (strain ATCC 700610 / UA159).